A 376-amino-acid polypeptide reads, in one-letter code: N-glycosylase/DNA lyase (376 aa).

Residues Asn-134, Arg-139, and Arg-189 each contribute to the DNA site. Lys-241 (schiff-base intermediate with DNA) is an active-site residue. 8-oxoguanine contacts are provided by Pro-258 and Asp-260. Residue His-262 coordinates DNA. 8-oxoguanine is bound by residues Gln-320 and Phe-324.

This sequence belongs to the type-1 OGG1 family.

It is found in the nucleus. The enzyme catalyses 2'-deoxyribonucleotide-(2'-deoxyribose 5'-phosphate)-2'-deoxyribonucleotide-DNA = a 3'-end 2'-deoxyribonucleotide-(2,3-dehydro-2,3-deoxyribose 5'-phosphate)-DNA + a 5'-end 5'-phospho-2'-deoxyribonucleoside-DNA + H(+). DNA repair enzyme that incises DNA at 8-oxoG residues. Excises 7,8-dihydro-8-oxoguanine and 2,6-diamino-4-hydroxy-5-N-methylformamidopyrimidine (FAPY) from damaged DNA. Has a beta-lyase activity that nicks DNA 3' to the lesion. The chain is N-glycosylase/DNA lyase (OGG1) from Saccharomyces cerevisiae (strain ATCC 204508 / S288c) (Baker's yeast).